Consider the following 211-residue polypeptide: Large ribosomal subunit protein uL4 (211 aa).

Disordered regions lie at residues 1–28 and 48–99; these read MAQA…ETEP and TAST…GPRY. Residues 10 to 28 show a composition bias toward basic and acidic residues; it reads RTGRRSEMELKGPRFETEP.

Belongs to the universal ribosomal protein uL4 family. As to quaternary structure, part of the 50S ribosomal subunit.

In terms of biological role, one of the primary rRNA binding proteins, this protein initially binds near the 5'-end of the 23S rRNA. It is important during the early stages of 50S assembly. It makes multiple contacts with different domains of the 23S rRNA in the assembled 50S subunit and ribosome. Forms part of the polypeptide exit tunnel. The chain is Large ribosomal subunit protein uL4 from Rubrobacter xylanophilus (strain DSM 9941 / JCM 11954 / NBRC 16129 / PRD-1).